The primary structure comprises 100 residues: MGNSKSKSKLSANQYEQQTVNSTKQVAILKRQAEPSLYGRHNCRCCWFANTNLIKCSDHYICLKCLNIMLGKSSFCDICGEELPTSIVVPIEPSAPPPED.

Glycine 2 carries N-myristoyl glycine; by host lipidation. The RING-type; atypical zinc finger occupies 43–79; sequence CRCCWFANTNLIKCSDHYICLKCLNIMLGKSSFCDIC. The PTAP/PSAP motif signature appears at 93–96; it reads PSAP.

This sequence belongs to the arenaviridae Z protein family. As to quaternary structure, interacts with protein NP; this interaction probably directs the encapsidated genome to budding sites. Interacts (via RING domain) with polymerase L; this interaction inhibits viral transcription and replication, Z partially blocks the product exit tunnel for the releasing nascent RNA product. Interacts with the glycoprotein complex; this interaction plays a role in virion budding. Interacts with host eIF4E; this interaction results in eIF4E reduced affinity for its substrate, the 5'-m7 G cap structure. Interacts (via late-budding domain) with host TSG101; this interaction is essential for budding and release of viral particles. Interacts with host RPLP0; this interaction may serve to load ribosome-like particles inside the virion. Interacts with host PML; this interaction induces PML bodies redistribution in the cytoplasm upon viral infection. Post-translationally, myristoylation is required for the role of RING finger protein Z in assembly and budding.

Its subcellular location is the virion. The protein localises to the host cytoplasm. The protein resides in the host perinuclear region. It is found in the host cell membrane. Its function is as follows. Plays a crucial role in virion assembly and budding. Expressed late in the virus life cycle, it acts as an inhibitor of viral transcription and RNA synthesis by interacting with the viral polymerase L. Presumably recruits the NP encapsidated genome to cellular membranes at budding sites via direct interaction with NP. Plays critical roles in the final steps of viral release by interacting with host TSG101, a member of the vacuolar protein-sorting pathway and using other cellular host proteins involved in vesicle formation pathway. The budding of the virus progeny occurs after association of protein Z with the viral glycoprotein complex SSP-GP1-GP2 at the cell periphery, step that requires myristoylation of protein Z. Also selectively represses protein production by associating with host eIF4E. In cell-based minigenome assay, has an inhibitory effect on the ribonucleoprotein machinery (vRNP), which is responsible for the replication and transcription of the viral genome. The chain is RING finger protein Z from Homo sapiens (Human).